Reading from the N-terminus, the 1274-residue chain is MENGHMNGVRTHHDRNSWTNGVNGGVAKREGSPDKGKAHANMSGSSVMMNGGGASFMDVDSQPPGGTKFNDLPDEIQHITADIMPLSLLLTRLSQWTHTKLQDEIAYLASKPLPQGVLNGTTNHQSADNHDTSQESLEKKVHLLNFLQDMHSKWVKTLVITEWSRKAAQVGALIDIRVHLLTKQAHYQELFWELIRMKQDLHWAKVPGPDLKTALEVLTTGQASWMPELGYIEPPPITWEEKEAFIDNINTMLSVRLTFDEHEKLPAAFRDYNIANGRVTFKVKGEFEVDLTIGDEDFEQQFWFIDFRFLFTPAPAELSHGVRTFLENKVNTILGDQGLAGCYNYLHEFVLTQKIIEFRRQATELAMGRWVDTLKVEKLNRAMSIQYWLKPPHGLEGPSSQTAKSWILLGVWSGKGVEGDLDSKPSSYISLRWFRDNKEVKDFDIPLNVETISAEKLLTAVIASHVEYILRSISSKLLSKPRFAQKHARLDLEISKEEPQNSSLAVQLFDNDKAVIKIEPLTGFFTMFPRSPVFLKGQMKLNTSSNVAEEGANLMEQLRFDHAVKDLNSRVRSIGWFVCRPPITQEETKTIVYSDASGSREAFKAVWLRKANWMTRQWFVMISMSLGGDQWWLVDLSPPKPNFPAGRLRLFTKMPMTSNQLTLSDTFFRNLSVYAAGMISHITDLRKLHTLKKSHTALELPNHSLPPQVRLPTIYVRLSEMLQQRPGSSSRTLTWAKDFVPIIFKGVRSHTGDQEGPADATAVRRDTPASIRAEARLTVIDRNKFKSLRGNVDHDVVYNHRTGQFSLKLRADMGTPVVDLLADRVQALERLMEFVEAIRLAGSNAIPQSVALREVVFTYSNDPAEPVVGPPQGPRAWNVHLDLPKDAKVVLTLEKGNPHIRALDMLQDMAQSTKTELLPSYLPFSLPLYRVLDRIEDEWESIAAKNAGNVAIVVKAAEWVTVRFTLPAPTTRRLLCLDIKTMGRKGRLLWHVKRTDEKGHERPLNAPQDEFDTLLQRSVWHAHGDGRKTFGTSAAADPKVGIETLLWSISESVKSLVGTLPPPPGTSPHPGGGTQDLQQGPQKTPQEMVAAQAAQAAQAAQAAQGMPPQRPKQQPPTPSQPQQQHRNVNQPQAQAQPQLHTQVQLQQAQVAQLQAQRQAQARANNSSNNNNTFVNRAHPGQPPQQRQSGPQTQAQQQQQRYQIQQQAQAMQRMQQQQQQQAAQQHAQQQGQGPQGQRSVHGQAGPQGVPQGQPGHGGGANGGMGGKNAPVVVID.

Disordered stretches follow at residues 1-40 (MENG…KAHA), 1056-1142 (LVGT…LHTQ), and 1155-1274 (AQRQ…VVID). Residues 27–37 (AKREGSPDKGK) show a composition bias toward basic and acidic residues. Positions 1075-1085 (QDLQQGPQKTP) are enriched in polar residues. Over residues 1090–1104 (AAQAAQAAQAAQAAQ) the composition is skewed to low complexity. Residues 1108 to 1119 (PQRPKQQPPTPS) are compositionally biased toward pro residues. Composition is skewed to low complexity over residues 1120–1142 (QPQQ…LHTQ), 1155–1172 (AQRQ…NNNT), and 1183–1252 (PQQR…PQGQ). Positions 1253–1265 (PGHGGGANGGMGG) are enriched in gly residues.

Belongs to the Mediator complex subunit 14 family. Component of the Mediator complex.

The protein resides in the nucleus. Component of the Mediator complex, a coactivator involved in the regulated transcription of nearly all RNA polymerase II-dependent genes. Mediator functions as a bridge to convey information from gene-specific regulatory proteins to the basal RNA polymerase II transcription machinery. Mediator is recruited to promoters by direct interactions with regulatory proteins and serves as a scaffold for the assembly of a functional preinitiation complex with RNA polymerase II and the general transcription factors. In Neurospora crassa (strain ATCC 24698 / 74-OR23-1A / CBS 708.71 / DSM 1257 / FGSC 987), this protein is Mediator of RNA polymerase II transcription subunit 14 (rgr1).